Consider the following 106-residue polypeptide: Large ribosomal subunit protein P1A (106 aa).

Positions 74–106 (AGGGAAAEEAAEEEKEEEAKEESDDDMGFGLFD) are disordered. Residues 82-100 (EAAEEEKEEEAKEESDDDM) are compositionally biased toward acidic residues.

The protein belongs to the eukaryotic ribosomal protein P1/P2 family. In terms of assembly, component of the large ribosomal subunit (LSU). Mature ribosomes consist of a small (40S) and a large (60S) subunit. The 40S subunit contains about 32 different proteins and 1 molecule of RNA (18S). The 60S subunit contains 45 different proteins and 3 molecules of RNA (25S, 5.8S and 5S). The 5 acidic ribosomal P-proteins form the stalk structure of the 60S subunit. They are organized as a pentameric complex in which uL10/P0 interacts with 2 heterodimers, P1A-P2B and P1B-P2A. In terms of processing, phosphorylated.

Its subcellular location is the cytoplasm. Component of the ribosome, a large ribonucleoprotein complex responsible for the synthesis of proteins in the cell. The small ribosomal subunit (SSU) binds messenger RNAs (mRNAs) and translates the encoded message by selecting cognate aminoacyl-transfer RNA (tRNA) molecules. The large subunit (LSU) contains the ribosomal catalytic site termed the peptidyl transferase center (PTC), which catalyzes the formation of peptide bonds, thereby polymerizing the amino acids delivered by tRNAs into a polypeptide chain. The nascent polypeptides leave the ribosome through a tunnel in the LSU and interact with protein factors that function in enzymatic processing, targeting, and the membrane insertion of nascent chains at the exit of the ribosomal tunnel. The protein is Large ribosomal subunit protein P1A (RPP1A) of Candida albicans (strain SC5314 / ATCC MYA-2876) (Yeast).